Consider the following 218-residue polypeptide: DNA ADP-ribosyl transferase (218 aa).

In terms of domain architecture, DarT spans 14-217 (ALIWRIVHRD…SVHTRSGWYF (204 aa)). Residues 18–20 (RIV) and R57 contribute to the NAD(+) site. The interval 41 to 59 (QAENWINIGNPELIGKRAG) is NAD(+)-binding element. R57 (proton acceptor) is an active-site residue. An ADP-ribosylating turn-turn loop region spans residues 123-170 (TDSHAYYNWTNYYTSLNSLDQIDWPILQARDFRRDPDDPAKFERYQAE). The active site involves E170.

The protein belongs to the DarT ADP-ribosyltransferase family. In terms of assembly, interacts with cognate antitoxin DarG (via C-terminus); this heterodimeric complex neutralizes the toxic effect of DarT by preventing ssDNA binding to DarT and consequently inactivating the toxin by direct protein-protein interactions.

The enzyme catalyses a thymidine in DNA + NAD(+) = an N-(ADP-alpha-D-ribosyl)-thymidine in DNA + nicotinamide + H(+). In terms of biological role, toxic component of the hybrid type II/IV toxin-antitoxin (TA) system DarTG, which plays a crucial role in controlling bacterial growth and bacteriophage infection. ADP-ribosylates ssDNA in the sequence TTT/TCT. In case of phage infection, DarT toxin ADP-ribosylates DNA, which inhibits both viral DNA and RNA synthesis and leads to abortive infection. Its toxic effect is neutralized by cognate antitoxin DarG. May target ssDNA loops during DNA replication, probably modifies thymidine. Wild-type protein cannot be expressed at low levels in the absence of its cognate antitoxin, but a mutant protein (G49D) can be expressed, which slows growth, rapidly inhibits DNA replication, and induces RecA expression and the SOS response. The slow growth phenotype can be suppressed by cognate antitoxin DarG. Has no activity on dsDNA in vitro. In vivo ADP-ribosylates genomic DNA (gDNA). Genetic data strongly suggests ADP-ribosylation by DarT probably generates ssDNA gaps that are repaired by the RecFOR-mediated homologous recombination pathway (RuvAB, RecG) and resolved by RuvC. In some cases these gaps probably migrate into dsDNA, where they are resolved by nucleotide excision repair (NER) detected by UvrAB, excised by UvrC, removed by UvrD, and repaired by Pol I and ligase. Other pathways may also be involved in ADP-ribosylation removal from DNA. In Escherichia coli O127:H6 (strain E2348/69 / EPEC), this protein is DNA ADP-ribosyl transferase.